A 264-amino-acid polypeptide reads, in one-letter code: tRNA pseudouridine synthase A (264 aa).

Catalysis depends on aspartate 56, which acts as the Nucleophile. Residue tyrosine 114 participates in substrate binding.

Belongs to the tRNA pseudouridine synthase TruA family. As to quaternary structure, homodimer.

The catalysed reaction is uridine(38/39/40) in tRNA = pseudouridine(38/39/40) in tRNA. In terms of biological role, formation of pseudouridine at positions 38, 39 and 40 in the anticodon stem and loop of transfer RNAs. The polypeptide is tRNA pseudouridine synthase A (Buchnera aphidicola subsp. Baizongia pistaciae (strain Bp)).